Here is a 318-residue protein sequence, read N- to C-terminus: Tyrosine--tRNA ligase (318 aa).

Y35 provides a ligand contact to L-tyrosine. The short motif at 40 to 48 (PSGKVHLGH) is the 'HIGH' region element. Residues Y154, Q158, D161, and Q176 each coordinate L-tyrosine. A 'KMSKS' region motif is present at residues 211–215 (KMSSS). S214 is a binding site for ATP.

Belongs to the class-I aminoacyl-tRNA synthetase family. TyrS type 3 subfamily. As to quaternary structure, homodimer.

The protein localises to the cytoplasm. The enzyme catalyses tRNA(Tyr) + L-tyrosine + ATP = L-tyrosyl-tRNA(Tyr) + AMP + diphosphate + H(+). In terms of biological role, catalyzes the attachment of tyrosine to tRNA(Tyr) in a two-step reaction: tyrosine is first activated by ATP to form Tyr-AMP and then transferred to the acceptor end of tRNA(Tyr). The protein is Tyrosine--tRNA ligase of Methanosphaera stadtmanae (strain ATCC 43021 / DSM 3091 / JCM 11832 / MCB-3).